We begin with the raw amino-acid sequence, 878 residues long: Serine/threonine-protein kinase N3 (878 aa).

3 REM-1 domains span residues 2–77 (EHRK…QVLL), 86–165 (SEPQ…SGSP), and 169–238 (PDLL…RLPP). Ser-164 carries the post-translational modification Phosphoserine. Residues 461–525 (PNTASPPKGR…TPCTKRPHMD (65 aa)) form a disordered region. One can recognise a Protein kinase domain in the interval 548-807 (FRCLAVLGRG…AEEIKVQPFF (260 aa)). ATP-binding positions include 554-562 (LGRGHFGKV) and Lys-577. Asp-673 acts as the Proton acceptor in catalysis. Thr-707, Thr-711, and Thr-849 each carry phosphothreonine. Residues 808-878 (RTTNWQALLA…DFVSEQFLES (71 aa)) form the AGC-kinase C-terminal domain.

Belongs to the protein kinase superfamily. AGC Ser/Thr protein kinase family. PKC subfamily. In terms of processing, autophosphorylated.

The protein localises to the nucleus. It is found in the cytoplasm. The protein resides in the perinuclear region. It carries out the reaction L-seryl-[protein] + ATP = O-phospho-L-seryl-[protein] + ADP + H(+). It catalyses the reaction L-threonyl-[protein] + ATP = O-phospho-L-threonyl-[protein] + ADP + H(+). Two specific sites, Thr-707 (activation loop of the kinase domain) and Thr-849 (turn motif), need to be phosphorylated for its full activation. Functionally, contributes to invasiveness in malignant prostate cancer. The protein is Serine/threonine-protein kinase N3 (Pkn3) of Mus musculus (Mouse).